The sequence spans 204 residues: phospholipase A2 inhibitor and Ly6/PLAUR domain-containing protein (204 aa).

The first 26 residues, 1–26 (MRLSRRPETFLLAFVLLCTLLGLGCP), serve as a signal peptide directing secretion. One can recognise a UPAR/Ly6 domain in the interval 27-117 (LHCEICTAAG…NSAFLSVPLT (91 aa)). Intrachain disulfides connect Cys29-Cys53, Cys32-Cys39, Cys46-Cys74, Cys80-Cys101, Cys102-Cys107, Cys126-Cys151, and Cys144-Cys172.

Belongs to the CNF-like-inhibitor family.

It localises to the secreted. The protein is phospholipase A2 inhibitor and Ly6/PLAUR domain-containing protein (PINLYP) of Homo sapiens (Human).